A 309-amino-acid polypeptide reads, in one-letter code: GATA transcription factor 25 (309 aa).

A disordered region spans residues 1 to 35; it reads MFGRHSIIPNNQIGTASASAGEDHVSASATSGHIP. Residues 8-18 are compositionally biased toward polar residues; sequence IPNNQIGTASA. Residues 77-112 form the Tify domain; the sequence is PPEGANQLTISFRGQVYVFDAVGADKVDAVLSLLGG. The CCT domain maps to 146–188; the sequence is RAQSLDRFRKKRNARCFEKKVRYGVRQEVALRMARNKGQFTSS. Polar residues predominate over residues 187-202; sequence SSKMTDGAYNSGTDQD. Positions 187–207 are disordered; the sequence is SSKMTDGAYNSGTDQDSAQDD. A GATA-type zinc finger spans residues 208–267; it reads AHPEISCTHCGISSKCTPMMRRGPSGPRTLCNACGLFWANRGTLRDLSKKTEENQLALMK. Positions 290–309 are disordered; sequence EHTSMVSLANGDNSNLLGDH. A compositionally biased stretch (polar residues) spans 293–309; the sequence is SMVSLANGDNSNLLGDH.

Belongs to the type IV zinc-finger family. Class C subfamily. Predominantly expressed in shoot apices, inflorescences and roots.

The protein localises to the nucleus. Its function is as follows. Transcriptional activator that specifically binds 5'-GATA-3' or 5'-GAT-3' motifs within gene promoters. In Arabidopsis thaliana (Mouse-ear cress), this protein is GATA transcription factor 25 (GATA25).